The primary structure comprises 61 residues: Small ribosomal subunit protein uS14 (61 aa).

Positions 24, 27, 40, and 43 each coordinate Zn(2+).

The protein belongs to the universal ribosomal protein uS14 family. Zinc-binding uS14 subfamily. Part of the 30S ribosomal subunit. Contacts proteins S3 and S10. Requires Zn(2+) as cofactor.

In terms of biological role, binds 16S rRNA, required for the assembly of 30S particles and may also be responsible for determining the conformation of the 16S rRNA at the A site. In Alkaliphilus metalliredigens (strain QYMF), this protein is Small ribosomal subunit protein uS14.